We begin with the raw amino-acid sequence, 67 residues long: Brevinin-1CDYa (67 aa).

The signal sequence occupies residues Met-1–Cys-22. A propeptide spanning residues Glu-23–Glu-45 is cleaved from the precursor. An intrachain disulfide couples Cys-61 to Cys-67.

The protein belongs to the frog skin active peptide (FSAP) family. Brevinin subfamily. As to expression, expressed by the skin glands.

It is found in the secreted. Antimicrobial peptide. Has low activity against the Gram-positive bacterium S.aureus (MIC=12.5 uM) and the Gram-negative bacterium E.coli (MIC=25 uM). Has weak hemolytic activity against human erythrocytes. The chain is Brevinin-1CDYa from Rana dybowskii (Dybovsky's frog).